The primary structure comprises 235 residues: Dephospho-CoA kinase (235 aa).

The DPCK domain maps to 15–219 (NVGLTGSISC…KKERLQRKSA (205 aa)). 23–28 (SCGKST) is a binding site for ATP.

Belongs to the CoaE family.

It localises to the cytoplasm. It catalyses the reaction 3'-dephospho-CoA + ATP = ADP + CoA + H(+). The protein operates within cofactor biosynthesis; coenzyme A biosynthesis; CoA from (R)-pantothenate: step 5/5. Its function is as follows. Catalyzes the phosphorylation of the 3'-hydroxyl group of dephosphocoenzyme A to form coenzyme A. The sequence is that of Dephospho-CoA kinase from Syntrophus aciditrophicus (strain SB).